Consider the following 73-residue polypeptide: Disintegrin lutosin (73 aa).

Residues 1-73 (EAGEECDCGS…ADCPRNGLYG (73 aa)) enclose the Disintegrin domain. Intrachain disulfides connect C6/C21, C8/C16, C15/C38, C29/C35, C34/C59, and C47/C66. A Cell attachment site motif is present at residues 51–53 (RGD).

Belongs to the venom metalloproteinase (M12B) family. P-II subfamily. P-IIa sub-subfamily. As to quaternary structure, monomer (disintegrin). In terms of tissue distribution, expressed by the venom gland.

The protein resides in the secreted. In terms of biological role, inhibits fibrinogen interaction with platelets. Acts by binding to alpha-IIb/beta-3 (ITGA2B/ITGB3) on the platelet surface and inhibits aggregation induced by ADP, thrombin, platelet-activating factor and collagen. The sequence is that of Disintegrin lutosin from Crotalus lutosus (Great basin rattlesnake).